The chain runs to 52 residues: UPF0181 protein NTHI1697 (52 aa).

This sequence belongs to the UPF0181 family.

This Haemophilus influenzae (strain 86-028NP) protein is UPF0181 protein NTHI1697.